Here is a 223-residue protein sequence, read N- to C-terminus: Putative synaptogyrin-2 like protein (223 aa).

An N-acetylmethionine modification is found at M1. The residue at position 3 (S3) is a Phosphoserine. The MARVEL domain occupies 20–170; that stretch reads FLTQPQVVAR…LASLTYQRYK (151 aa). Helical transmembrane passes span 26–46, 71–91, 104–124, and 146–166; these read VVARALCLVFALIVFSCIYGE, GSAIGVLAFLASAFLVVDAYF, VIGDLLFSALWTFLWFVGFCF, and AAITFSFFSIFSWGVLASLTY. The interval 197–223 is disordered; it reads ASVDNYQQPPFTQNAETTEGYQPPPVY. A compositionally biased stretch (polar residues) spans 200 to 216; that stretch reads DNYQQPPFTQNAETTEG.

Belongs to the synaptogyrin family.

The protein localises to the membrane. This Homo sapiens (Human) protein is Putative synaptogyrin-2 like protein.